We begin with the raw amino-acid sequence, 155 residues long: Ribosomal RNA large subunit methyltransferase H (155 aa).

S-adenosyl-L-methionine is bound by residues L72, G103, and L122–L127.

Belongs to the RNA methyltransferase RlmH family. In terms of assembly, homodimer.

It is found in the cytoplasm. It catalyses the reaction pseudouridine(1915) in 23S rRNA + S-adenosyl-L-methionine = N(3)-methylpseudouridine(1915) in 23S rRNA + S-adenosyl-L-homocysteine + H(+). Specifically methylates the pseudouridine at position 1915 (m3Psi1915) in 23S rRNA. In Salmonella dublin (strain CT_02021853), this protein is Ribosomal RNA large subunit methyltransferase H.